The following is a 130-amino-acid chain: Small ribosomal subunit protein uS8 (130 aa).

This sequence belongs to the universal ribosomal protein uS8 family. Part of the 30S ribosomal subunit.

One of the primary rRNA binding proteins, it binds directly to 16S rRNA central domain where it helps coordinate assembly of the platform of the 30S subunit. This Methanosarcina mazei (strain ATCC BAA-159 / DSM 3647 / Goe1 / Go1 / JCM 11833 / OCM 88) (Methanosarcina frisia) protein is Small ribosomal subunit protein uS8.